Reading from the N-terminus, the 494-residue chain is 3-octaprenyl-4-hydroxybenzoate carboxy-lyase (494 aa).

Residue Asn-172 participates in Mn(2+) binding. Residues 175–177 (IYR), 189–191 (RWL), and 194–195 (RG) each bind prenylated FMN. Residue Glu-238 coordinates Mn(2+). The active-site Proton donor is the Asp-287.

This sequence belongs to the UbiD family. As to quaternary structure, homohexamer. The cofactor is prenylated FMN. Mn(2+) serves as cofactor.

It localises to the cell membrane. The catalysed reaction is a 4-hydroxy-3-(all-trans-polyprenyl)benzoate + H(+) = a 2-(all-trans-polyprenyl)phenol + CO2. It functions in the pathway cofactor biosynthesis; ubiquinone biosynthesis. Its function is as follows. Catalyzes the decarboxylation of 3-octaprenyl-4-hydroxy benzoate to 2-octaprenylphenol, an intermediate step in ubiquinone biosynthesis. This Shigella flexneri serotype 5b (strain 8401) protein is 3-octaprenyl-4-hydroxybenzoate carboxy-lyase.